The sequence spans 362 residues: Phosphoserine aminotransferase (362 aa).

Residues S9 and R42 each coordinate L-glutamate. Residues 76–77 (GR), W102, T153, D174, and Q197 each bind pyridoxal 5'-phosphate. K198 carries the post-translational modification N6-(pyridoxal phosphate)lysine. Position 239–240 (239–240 (NT)) interacts with pyridoxal 5'-phosphate.

This sequence belongs to the class-V pyridoxal-phosphate-dependent aminotransferase family. SerC subfamily. As to quaternary structure, homodimer. The cofactor is pyridoxal 5'-phosphate.

Its subcellular location is the cytoplasm. It carries out the reaction O-phospho-L-serine + 2-oxoglutarate = 3-phosphooxypyruvate + L-glutamate. The enzyme catalyses 4-(phosphooxy)-L-threonine + 2-oxoglutarate = (R)-3-hydroxy-2-oxo-4-phosphooxybutanoate + L-glutamate. It functions in the pathway amino-acid biosynthesis; L-serine biosynthesis; L-serine from 3-phospho-D-glycerate: step 2/3. The protein operates within cofactor biosynthesis; pyridoxine 5'-phosphate biosynthesis; pyridoxine 5'-phosphate from D-erythrose 4-phosphate: step 3/5. Functionally, catalyzes the reversible conversion of 3-phosphohydroxypyruvate to phosphoserine and of 3-hydroxy-2-oxo-4-phosphonooxybutanoate to phosphohydroxythreonine. Is involved in both pyridoxine and serine biosynthesis. The chain is Phosphoserine aminotransferase (serC) from Escherichia coli (strain K12).